Consider the following 104-residue polypeptide: MNPVSYINDEQQGDLLLFVYVQPKASRDQIVGLYGNELKIAITAPPIDGKANAYLSKYLAKACKVAKSQVHIIKGEQGRHKQIRISQPQVIPPEIAALLSPFSL.

Belongs to the UPF0235 family.

The polypeptide is UPF0235 protein Sfri_2863 (Shewanella frigidimarina (strain NCIMB 400)).